We begin with the raw amino-acid sequence, 1025 residues long: Myosin phosphatase Rho-interacting protein (1025 aa).

The interval 2 to 383 (SAAKENPCRK…DRRSTEPSVT (382 aa)) is interaction with F-actin. The PH 1 domain occupies 43-150 (KPIYGGWLLL…WLEMLMVYPR (108 aa)). 2 disordered regions span residues 152–302 (NKQN…RRSQ) and 317–383 (HMET…PSVT). Positions 179–189 (SSSSSSSSSSS) are enriched in low complexity. Phosphoserine is present on residues Ser192, Ser217, Ser218, Ser220, Ser224, and Ser226. Low complexity predominate over residues 217-236 (SSLSPAQSPSQSQPPAASSL). Over residues 239 to 263 (PGLESKEEESAMSSDRMDCGRKVRV) the composition is skewed to basic and acidic residues. 2 positions are modified to phosphoserine: Ser265 and Ser269. Residues 271-281 (EKTKQDLKAEE) show a composition bias toward basic and acidic residues. A compositionally biased stretch (pro residues) spans 284-294 (LPPPLSPPSPS). Ser289 and Ser292 each carry phosphoserine. Thr295 carries the post-translational modification Phosphothreonine. The residue at position 326 (Ser326) is a Phosphoserine. Residues 332–348 (RQGRSEKRAFPRKRDFT) are compositionally biased toward basic and acidic residues. The residue at position 348 (Thr348) is a Phosphothreonine. Phosphoserine is present on residues Ser362 and Ser365. Residues 387–483 (LNFKKGWLTK…WIQTIMKHVH (97 aa)) form the PH 2 domain. Disordered stretches follow at residues 485–545 (TTAP…TFDW) and 560–591 (VGGVGPADTHEPLRPEAEPGELERERARRREE). Phosphoserine is present on Ser493. 2 stretches are compositionally biased toward basic and acidic residues: residues 524–545 (PEQKRSRARERRREGRSKTFDW) and 567–589 (DTHEPLRPEAEPGELERERARRR). The segment at 546–824 (AEFRPIQQAL…SVQRELEVLS (279 aa)) is interaction with RHOA. Ser619 carries the phosphoserine modification. At Thr646 the chain carries Phosphothreonine. 2 positions are modified to phosphoserine: Ser663 and Ser800. Positions 673–977 (HELTSLLEKE…AATEALGEKS (305 aa)) form a coiled coil. Positions 824–879 (SEQYSQKCLENAHLAQALEAERQALRQCQRENQELNAHNQELNNRLAAEITRLRTL) are interaction with PPP1R12A. 5 positions are modified to phosphoserine: Ser891, Ser977, Ser993, Ser1014, and Ser1016.

In terms of assembly, binds F-actin through its N-terminus. Interacts with MYZAP. Binds RHOA, PPP1R12A/MBS and PPP1R12C/MBS85 through adjacent coiled coil domains.

The protein localises to the cytoplasm. It localises to the cytoskeleton. Its function is as follows. Targets myosin phosphatase to the actin cytoskeleton. Required for the regulation of the actin cytoskeleton by RhoA and ROCK1. Depletion leads to an increased number of stress fibers in smooth muscle cells through stabilization of actin fibers by phosphorylated myosin. Overexpression of MRIP as well as its F-actin-binding region leads to disassembly of stress fibers in neuronal cells. This chain is Myosin phosphatase Rho-interacting protein (MPRIP), found in Homo sapiens (Human).